Consider the following 429-residue polypeptide: 3-phosphoshikimate 1-carboxyvinyltransferase (429 aa).

3-phosphoshikimate-binding residues include Lys11, Ser12, and Arg16. Lys11 serves as a coordination point for phosphoenolpyruvate. Phosphoenolpyruvate-binding residues include Gly82 and Arg110. 3-phosphoshikimate contacts are provided by Ser155, Gln157, Asp302, and Lys329. Residue Gln157 coordinates phosphoenolpyruvate. The active-site Proton acceptor is the Asp302. The phosphoenolpyruvate site is built by Arg333 and Arg385.

This sequence belongs to the EPSP synthase family. As to quaternary structure, monomer.

It localises to the cytoplasm. The catalysed reaction is 3-phosphoshikimate + phosphoenolpyruvate = 5-O-(1-carboxyvinyl)-3-phosphoshikimate + phosphate. The protein operates within metabolic intermediate biosynthesis; chorismate biosynthesis; chorismate from D-erythrose 4-phosphate and phosphoenolpyruvate: step 6/7. Its function is as follows. Catalyzes the transfer of the enolpyruvyl moiety of phosphoenolpyruvate (PEP) to the 5-hydroxyl of shikimate-3-phosphate (S3P) to produce enolpyruvyl shikimate-3-phosphate and inorganic phosphate. The sequence is that of 3-phosphoshikimate 1-carboxyvinyltransferase from Helicobacter pylori (strain Shi470).